Here is a 294-residue protein sequence, read N- to C-terminus: 4-hydroxy-tetrahydrodipicolinate synthase (294 aa).

T47 contributes to the pyruvate binding site. The Proton donor/acceptor role is filled by Y135. K163 serves as the catalytic Schiff-base intermediate with substrate. Residue T205 coordinates pyruvate.

This sequence belongs to the DapA family. In terms of assembly, homotetramer; dimer of dimers.

The protein localises to the cytoplasm. It carries out the reaction L-aspartate 4-semialdehyde + pyruvate = (2S,4S)-4-hydroxy-2,3,4,5-tetrahydrodipicolinate + H2O + H(+). It functions in the pathway amino-acid biosynthesis; L-lysine biosynthesis via DAP pathway; (S)-tetrahydrodipicolinate from L-aspartate: step 3/4. In terms of biological role, catalyzes the condensation of (S)-aspartate-beta-semialdehyde [(S)-ASA] and pyruvate to 4-hydroxy-tetrahydrodipicolinate (HTPA). This is 4-hydroxy-tetrahydrodipicolinate synthase from Rickettsia africae (strain ESF-5).